The primary structure comprises 393 residues: Sulfate adenylyltransferase (393 aa).

The protein belongs to the sulfate adenylyltransferase family.

It catalyses the reaction sulfate + ATP + H(+) = adenosine 5'-phosphosulfate + diphosphate. Its pathway is sulfur metabolism; hydrogen sulfide biosynthesis; sulfite from sulfate: step 1/3. In Synechococcus sp. (strain JA-3-3Ab) (Cyanobacteria bacterium Yellowstone A-Prime), this protein is Sulfate adenylyltransferase.